A 761-amino-acid polypeptide reads, in one-letter code: Subtilisin-like protease SBT3 (761 aa).

Positions 1 to 22 (MELLHLLLFSWALSAHLFLALA) are cleaved as a signal peptide. A propeptide spanning residues 23–112 (QRSTYIVHLD…AYKDRTVEPH (90 aa)) is cleaved from the precursor. The region spanning 26-110 (TYIVHLDKSL…ISAYKDRTVE (85 aa)) is the Inhibitor I9 domain. The region spanning 116-606 (TSDFLKLNPS…AGHVDPNRAL (491 aa)) is the Peptidase S8 domain. D144 acts as the Charge relay system in catalysis. C170 and C181 are oxidised to a cystine. N-linked (GlcNAc...) (complex) asparagine; alternate glycans are attached at residues N177 and N203. Residues N177 and N203 are each glycosylated (N-linked (GlcNAc...) (paucimannose) asparagine; alternate). H215 acts as the Charge relay system in catalysis. N376 is a glycosylation site (N-linked (GlcNAc...) (paucimannose) asparagine; partial). A disulfide bond links C382 and C401. The active-site Charge relay system is the S538. The tract at residues 574-598 (LDNTRKPIKDSDNNKAATPLDMGAG) is disordered. Positions 575-586 (DNTRKPIKDSDN) are enriched in basic and acidic residues. A disulfide bond links C624 and C645. Residues N697 and N745 are each glycosylated (N-linked (GlcNAc...) (complex) asparagine; alternate). N-linked (GlcNAc...) (paucimannose) asparagine; alternate glycans are attached at residues N697 and N745. A necessary for prodomain cleavage and secretion region spans residues 756-761 (PIIEVW).

The protein belongs to the peptidase S8 family. As to quaternary structure, homodimer. Post-translationally, propeptide is internally cleaved at Asn-38 and Asp-52 in a pH-dependent manner leading to the dissociation of the propeptide from the catalytic domain and resulting in the release of the active subtilase. Cleavage occurs at pH 5.7 and to a stronger extent at pH 5.2. Expressed in flowers, cotyledons and leaves with the highest expression in roots.

The protein localises to the secreted. Its activity is regulated as follows. Inhibited by 1 mM 4-(2-aminoethyl)-benzenesulfonyl fluoride (AEBSF), a general inhibitor of serine proteinases, but not by the more selective serine protease inhibitors N-alpha-tosyl-L-lysinyl-chloromethylketone (TLCK), N-tosyl-L-phenylalaninyl-chloromethylketone (TPCK), leupeptin, aprotinin or benzamidine. Its proteolytic activity is autoinhibited by the non-covalent binding of the propeptide to the catalytic domain. No effect on activity by the addition of CaCl(2) or calcium chelators. Its function is as follows. Serine protease. Has preference for Gln in the P1 position and Lys in the P2 position of oligopeptide substrates. Active also with His in the P1 position. Involved in resistance against insects partly by regulating expression of systemic wound response genes and possibly by its post-ingestive activity in the insect gut. Apart from the role in defense, may be involved in regulation of pectin methylesterases (PMEs) activity and pectin methylesterification of the cell wall. This chain is Subtilisin-like protease SBT3, found in Solanum lycopersicum (Tomato).